A 147-amino-acid chain; its full sequence is Hordoindoline-B2 (147 aa).

The signal sequence occupies residues 1-19 (MKTLFLLALLALVASTTSA). Positions 20-28 (QYSVGGGYN) are excised as a propeptide.

In terms of processing, five disulfide bonds are present. As to expression, found in endosperm and aleurone layer of developing kernels, but not in the embryo.

The protein resides in the membrane. Its subcellular location is the secreted. It is found in the extracellular space. Its function is as follows. Acts as a membranotoxin, probably through its antibacterial and antifungal activities, contributing to the defense mechanism of the plant against predators. Forms monovalent cation-selective ion channels in membranes. Contributes to grain texture and hardness. The polypeptide is Hordoindoline-B2 (HINB-2) (Hordeum vulgare (Barley)).